The primary structure comprises 326 residues: Aspartate--ammonia ligase (326 aa).

The protein belongs to the class-II aminoacyl-tRNA synthetase family. AsnA subfamily.

The protein localises to the cytoplasm. The catalysed reaction is L-aspartate + NH4(+) + ATP = L-asparagine + AMP + diphosphate + H(+). It functions in the pathway amino-acid biosynthesis; L-asparagine biosynthesis; L-asparagine from L-aspartate (ammonia route): step 1/1. In Malacoplasma penetrans (strain HF-2) (Mycoplasma penetrans), this protein is Aspartate--ammonia ligase.